Here is a 282-residue protein sequence, read N- to C-terminus: Heme oxygenase 1, chloroplastic (282 aa).

The N-terminal 54 residues, 1 to 54 (MAYLAPISSSLSIFKNPQLSRFQFSSSSPNPLFLRPRIQILSMTMNKSPSLVVV), are a transit peptide targeting the chloroplast. Position 86 (His86) interacts with heme b.

This sequence belongs to the heme oxygenase family. In terms of tissue distribution, widely expressed.

It localises to the plastid. The protein localises to the chloroplast. It catalyses the reaction heme b + 3 reduced [NADPH--hemoprotein reductase] + 3 O2 = biliverdin IXalpha + CO + Fe(2+) + 3 oxidized [NADPH--hemoprotein reductase] + 3 H2O + H(+). Activated by ascorbate. In terms of biological role, key enzyme in the synthesis of the chromophore of the phytochrome family of plant photoreceptors. Catalyzes the opening of the heme ring to form the open-chain tetrapyrrole biliverdin IX with the release of iron and carbon monoxide (CO). Produces specifically the biliverdin IX-alpha isomer. Can form complex with heme, is ferredoxin-dependent and its activity is increased in the presence of ascorbate. Plays a role in salt acclimation signaling. May affect the plastid-to-nucleus signaling pathway by perturbing tetrapyrrole synthesis. The plastid-to-nucleus signal plays an important role in the coordinated expression of both nuclear- and chloroplast-localized genes that encode photosynthesis-related proteins. In Arabidopsis thaliana (Mouse-ear cress), this protein is Heme oxygenase 1, chloroplastic (HO1).